The primary structure comprises 149 residues: Putative prefoldin subunit alpha (149 aa).

Belongs to the prefoldin subunit alpha family.

The protein resides in the cytoplasm. Its function is as follows. Molecular chaperone capable of stabilizing a range of proteins. The sequence is that of Putative prefoldin subunit alpha from Aquifex aeolicus (strain VF5).